We begin with the raw amino-acid sequence, 738 residues long: Ethylene receptor (738 aa).

Helical transmembrane passes span 23 to 43 (ISDF…IYFV), 54 to 74 (VLVQ…INLW), and 89 to 109 (IAKV…VHII). The Cu cation site is built by Cys-65 and His-69. Residues 158–307 (DRHTILRTTL…VVADQVAVAL (150 aa)) form the GAF domain. The 240-residue stretch at 350–589 (VMNHEMRTPM…IFIVKLGIPE (240 aa)) folds into the Histidine kinase domain. The residue at position 353 (His-353) is a Phosphohistidine; by autocatalysis. The 116-residue stretch at 615 to 730 (KVLLMDDNGV…KMRSVLSDLL (116 aa)) folds into the Response regulatory domain. Asp-663 carries the post-translational modification 4-aspartylphosphate.

Belongs to the ethylene receptor family. In terms of assembly, homodimer; disulfide-linked. Requires Cu cation as cofactor. Activation probably requires a transfer of a phosphate group between a His in the transmitter domain and an Asp of the receiver domain. In terms of tissue distribution, higher expression in arils than in seeds.

It localises to the endoplasmic reticulum membrane. It catalyses the reaction ATP + protein L-histidine = ADP + protein N-phospho-L-histidine.. Functionally, may act early in the ethylene signal transduction pathway, possibly as an ethylene receptor, or as a regulator of the pathway. The polypeptide is Ethylene receptor (ETR1) (Passiflora edulis (Passion fruit)).